We begin with the raw amino-acid sequence, 89 residues long: MSIAAERKAEVIKTNARKDGDTGSPEVQVAILSERIANLTAHFKTHVKDNHSRRGLLKLVSTRRSLLDYVKKRDEARYKALLEKHNIRR.

Basic and acidic residues predominate over residues 1 to 21 (MSIAAERKAEVIKTNARKDGD). The tract at residues 1–24 (MSIAAERKAEVIKTNARKDGDTGS) is disordered.

Belongs to the universal ribosomal protein uS15 family. In terms of assembly, part of the 30S ribosomal subunit. Forms a bridge to the 50S subunit in the 70S ribosome, contacting the 23S rRNA.

Its function is as follows. One of the primary rRNA binding proteins, it binds directly to 16S rRNA where it helps nucleate assembly of the platform of the 30S subunit by binding and bridging several RNA helices of the 16S rRNA. Forms an intersubunit bridge (bridge B4) with the 23S rRNA of the 50S subunit in the ribosome. This chain is Small ribosomal subunit protein uS15, found in Rhodopseudomonas palustris (strain BisA53).